Here is a 150-residue protein sequence, read N- to C-terminus: Submaxillary gland androgen-regulated protein 2, isoform alpha (150 aa).

The N-terminal stretch at 1–22 is a signal peptide; it reads MKALYMVFVLWVLIGCFLSGEC.

It localises to the secreted. Its function is as follows. May play a role in protection or detoxification. The protein is Submaxillary gland androgen-regulated protein 2, isoform alpha (Smr2) of Mus musculus (Mouse).